We begin with the raw amino-acid sequence, 269 residues long: Cytochrome c oxidase subunit 3 (269 aa).

6 helical membrane passes run 46 to 66 (NSYY…AFWF), 90 to 110 (GVIL…WAFF), 138 to 160 (PLLN…HSLI), 167 to 187 (ALYG…FQGV), 207 to 227 (FGTG…AVAL), and 247 to 267 (ILYW…IYYW).

It belongs to the cytochrome c oxidase subunit 3 family. As to quaternary structure, component of the cytochrome c oxidase (complex IV, CIV), a multisubunit enzyme composed of a catalytic core of 3 subunits and several supernumerary subunits. The complex exists as a monomer or a dimer and forms supercomplexes (SCs) in the inner mitochondrial membrane with ubiquinol-cytochrome c oxidoreductase (cytochrome b-c1 complex, complex III, CIII).

It localises to the mitochondrion inner membrane. It catalyses the reaction 4 Fe(II)-[cytochrome c] + O2 + 8 H(+)(in) = 4 Fe(III)-[cytochrome c] + 2 H2O + 4 H(+)(out). Component of the cytochrome c oxidase, the last enzyme in the mitochondrial electron transport chain which drives oxidative phosphorylation. The respiratory chain contains 3 multisubunit complexes succinate dehydrogenase (complex II, CII), ubiquinol-cytochrome c oxidoreductase (cytochrome b-c1 complex, complex III, CIII) and cytochrome c oxidase (complex IV, CIV), that cooperate to transfer electrons derived from NADH and succinate to molecular oxygen, creating an electrochemical gradient over the inner membrane that drives transmembrane transport and the ATP synthase. Cytochrome c oxidase is the component of the respiratory chain that catalyzes the reduction of oxygen to water. Electrons originating from reduced cytochrome c in the intermembrane space (IMS) are transferred via the dinuclear copper A center (CU(A)) of subunit 2 and heme A of subunit 1 to the active site in subunit 1, a binuclear center (BNC) formed by heme A3 and copper B (CU(B)). The BNC reduces molecular oxygen to 2 water molecules using 4 electrons from cytochrome c in the IMS and 4 protons from the mitochondrial matrix. The sequence is that of Cytochrome c oxidase subunit 3 (COIII) from Podospora anserina (strain S / ATCC MYA-4624 / DSM 980 / FGSC 10383) (Pleurage anserina).